We begin with the raw amino-acid sequence, 190 residues long: Cytoglobin (190 aa).

Residues 18–167 enclose the Globin domain; sequence ELSEAERKAV…IYSHVTAAYK (150 aa). An intrachain disulfide couples Cys38 to Cys83. Heme b is bound by residues His81 and His113.

This sequence belongs to the globin family. As to quaternary structure, monomeric. Homodimer; disulfide-linked in vitro. Also homooligomeric in vitro. Post-translationally, the formation of an intramolecular disulfide bond between cysteines Cys-38 and Cys-83 specifically enhances the nitrite reductase activity. As to expression, widely expressed. Highest expression in heart, stomach, bladder and small intestine.

The protein resides in the cytoplasm. It localises to the nucleus. The catalysed reaction is Fe(II)-heme b-[protein] + nitric oxide + O2 = Fe(III)-heme b-[protein] + nitrate. It catalyses the reaction Fe(III)-heme b-[protein] + nitric oxide + H2O = Fe(II)-heme b-[protein] + nitrite + 2 H(+). It carries out the reaction 2 superoxide + 2 H(+) = H2O2 + O2. The enzyme catalyses H2O2 + AH2 = A + 2 H2O. Its activity is regulated as follows. The nitric oxide dioxygenase activity is activated by a reducing system composed of cytochrome b5, its upstream reductase CYB5R3 and NADH. In terms of biological role, probable multifunctional globin with a hexacoordinated heme iron required for the catalysis of various reactions depending on redox condition of the cell as well as oxygen availability. Has a nitric oxide dioxygenase (NOD) activity and is most probably involved in cell-mediated and oxygen-dependent nitric oxide consumption. By scavenging this second messenger may regulate several biological processes including endothelium-mediated vasodilation and vascular tone. Under normoxic conditions functions as a nitric oxide dioxygenase (NOD) but under hypoxic conditions the globin may switch its function to that of a nitrite (NO2) reductase (NiR), generating nitric oxide. Could also have peroxidase and superoxide dismutase activities, detoxifying reactive oxygen species and protecting cells against oxidative stress. Also binds dioxygen with low affinity and could function as an oxygen sensor but has probably no function as a respiratory oxygen carrier. The sequence is that of Cytoglobin from Homo sapiens (Human).